A 625-amino-acid polypeptide reads, in one-letter code: Phosphomethylpyrimidine synthase (625 aa).

Residues N237, M266, Y295, H331, S351–G353, D392–R395, and E431 each bind substrate. Zn(2+) is bound at residue H435. Y458 is a substrate binding site. Position 499 (H499) interacts with Zn(2+). Residues C579, C582, and C587 each coordinate [4Fe-4S] cluster.

The protein belongs to the ThiC family. As to quaternary structure, homodimer. [4Fe-4S] cluster is required as a cofactor.

It carries out the reaction 5-amino-1-(5-phospho-beta-D-ribosyl)imidazole + S-adenosyl-L-methionine = 4-amino-2-methyl-5-(phosphooxymethyl)pyrimidine + CO + 5'-deoxyadenosine + formate + L-methionine + 3 H(+). It functions in the pathway cofactor biosynthesis; thiamine diphosphate biosynthesis. Catalyzes the synthesis of the hydroxymethylpyrimidine phosphate (HMP-P) moiety of thiamine from aminoimidazole ribotide (AIR) in a radical S-adenosyl-L-methionine (SAM)-dependent reaction. The chain is Phosphomethylpyrimidine synthase from Cupriavidus metallidurans (strain ATCC 43123 / DSM 2839 / NBRC 102507 / CH34) (Ralstonia metallidurans).